The chain runs to 282 residues: Acyl-CoA-binding domain-containing protein 6 (282 aa).

Positions 1-12 are enriched in polar residues; sequence MASSFLPSGATT. Residues 1 to 34 are disordered; it reads MASSFLPSGATTGDSGGELSSGDDSGDVESLQSP. The segment covering 17 to 31 has biased composition (low complexity); that stretch reads GELSSGDDSGDVESL. Phosphoserine is present on Ser41. The 86-residue stretch at 42–127 folds into the ACB domain; sequence LPELFEKAAE…VKKLDPSWNP (86 aa). An acyl-CoA-binding positions include 69-73 and Lys95; that span reads YARYK. A Phosphoserine modification is found at Ser106. An acyl-CoA is bound at residue Tyr114. ANK repeat units lie at residues 191 to 220 and 224 to 253; these read EGRT…DINC and EGQT…DPTL.

In terms of assembly, monomer.

It is found in the cytoplasm. Binds long-chain acyl-coenzyme A molecules with a strong preference for unsaturated C18:1-CoA, lower affinity for unsaturated C20:4-CoA, and very weak affinity for saturated C16:0-CoA. Does not bind fatty acids. The polypeptide is Acyl-CoA-binding domain-containing protein 6 (ACBD6) (Bos taurus (Bovine)).